The sequence spans 329 residues: Putative glucose ABC transporter permease protein TsgC13 (329 aa).

7 consecutive transmembrane segments (helical) span residues 3–23 (FAAG…LAGL), 32–52 (GVLN…GFVV), 60–80 (WLGF…HAFL), 89–109 (VISG…FGSG), 139–161 (AFFR…WFFL), 193–213 (LAVI…SLAF), and 216–236 (LWVP…VVFA).

It belongs to the binding-protein-dependent transport system permease family. The complex is composed of two ATP-binding proteins (TsgD13), two transmembrane proteins (TsgB13 and TsgC13) and a solute-binding protein (TsgA13).

The protein resides in the cell membrane. Functionally, part of an ABC transporter complex involved in glucose import (Potential). Responsible for the translocation of the substrate across the membrane. This chain is Putative glucose ABC transporter permease protein TsgC13 (tsgC13), found in Haloferax volcanii (strain ATCC 29605 / DSM 3757 / JCM 8879 / NBRC 14742 / NCIMB 2012 / VKM B-1768 / DS2) (Halobacterium volcanii).